We begin with the raw amino-acid sequence, 202 residues long: ATP-dependent Clp protease proteolytic subunit (202 aa).

The active-site Nucleophile is Ser-106. His-131 is a catalytic residue.

The protein belongs to the peptidase S14 family. Fourteen ClpP subunits assemble into 2 heptameric rings which stack back to back to give a disk-like structure with a central cavity, resembling the structure of eukaryotic proteasomes.

It localises to the cytoplasm. It carries out the reaction Hydrolysis of proteins to small peptides in the presence of ATP and magnesium. alpha-casein is the usual test substrate. In the absence of ATP, only oligopeptides shorter than five residues are hydrolyzed (such as succinyl-Leu-Tyr-|-NHMec, and Leu-Tyr-Leu-|-Tyr-Trp, in which cleavage of the -Tyr-|-Leu- and -Tyr-|-Trp bonds also occurs).. In terms of biological role, cleaves peptides in various proteins in a process that requires ATP hydrolysis. Has a chymotrypsin-like activity. Plays a major role in the degradation of misfolded proteins. The polypeptide is ATP-dependent Clp protease proteolytic subunit (Paracidovorax citrulli (strain AAC00-1) (Acidovorax citrulli)).